A 463-amino-acid chain; its full sequence is Major capsid protein (463 aa).

The protein belongs to the NCLDV major capsid protein family. In terms of assembly, homotrimer.

It localises to the virion. Major capsid protein that self assembles to form an icosahedral capsid. Represents around 50% of the total virion protein mass. The chain is Major capsid protein (MCP) from Rana tigrina ranavirus.